A 334-amino-acid polypeptide reads, in one-letter code: Thiamine-binding periplasmic protein (334 aa).

Positions 1-23 are cleaved as a signal peptide; it reads MRLLSLLTFSLFAVIGLAPAAQA. Thiamine is bound by residues 64–65, 166–167, W202, and 220–223; these read DG, AT, and YTTS.

It belongs to the bacterial solute-binding protein 1 family. The complex is composed of two ATP-binding proteins (ThiQ), two transmembrane proteins (ThiP) and a solute-binding protein (ThiB).

It is found in the periplasm. In terms of biological role, part of the ABC transporter complex ThiBPQ involved in thiamine import. The protein is Thiamine-binding periplasmic protein (thiB) of Brucella melitensis biotype 1 (strain ATCC 23456 / CCUG 17765 / NCTC 10094 / 16M).